Here is a 118-residue protein sequence, read N- to C-terminus: Ribonuclease P protein component (118 aa).

Belongs to the RnpA family. In terms of assembly, consists of a catalytic RNA component (M1 or rnpB) and a protein subunit.

The catalysed reaction is Endonucleolytic cleavage of RNA, removing 5'-extranucleotides from tRNA precursor.. In terms of biological role, RNaseP catalyzes the removal of the 5'-leader sequence from pre-tRNA to produce the mature 5'-terminus. It can also cleave other RNA substrates such as 4.5S RNA. The protein component plays an auxiliary but essential role in vivo by binding to the 5'-leader sequence and broadening the substrate specificity of the ribozyme. In Bifidobacterium animalis subsp. lactis (strain AD011), this protein is Ribonuclease P protein component.